The sequence spans 237 residues: Aspartate/glutamate leucyltransferase (237 aa).

It belongs to the R-transferase family. Bpt subfamily.

The protein localises to the cytoplasm. The enzyme catalyses N-terminal L-glutamyl-[protein] + L-leucyl-tRNA(Leu) = N-terminal L-leucyl-L-glutamyl-[protein] + tRNA(Leu) + H(+). It catalyses the reaction N-terminal L-aspartyl-[protein] + L-leucyl-tRNA(Leu) = N-terminal L-leucyl-L-aspartyl-[protein] + tRNA(Leu) + H(+). In terms of biological role, functions in the N-end rule pathway of protein degradation where it conjugates Leu from its aminoacyl-tRNA to the N-termini of proteins containing an N-terminal aspartate or glutamate. This Marinobacter nauticus (strain ATCC 700491 / DSM 11845 / VT8) (Marinobacter aquaeolei) protein is Aspartate/glutamate leucyltransferase.